Here is an 862-residue protein sequence, read N- to C-terminus: Rab GTPase-binding effector protein 1 (862 aa).

Residue alanine 2 is modified to N-acetylalanine. The stretch at 11–345 forms a coiled coil; sequence DVSLQQRVAE…KKADVEEEIK (335 aa). N6-acetyllysine is present on lysine 282. The tract at residues 315–338 is disordered; that stretch reads ELKKKDQEDDEQQRLNKRKDHKKA. Serine 374, serine 377, and serine 407 each carry phosphoserine. At threonine 408 the chain carries Phosphothreonine. At serine 410 the chain carries Phosphoserine. Residues 435–447 form an interaction with AP1G1, AP1G2, GGA1, GGA2 and GGA3 region; sequence DESDFGPLVGADS. A coiled-coil region spans residues 534–816; sequence DMCSNYEKQL…LQTELDVSEQ (283 aa).

The protein belongs to the rabaptin family. Homodimer when bound to RAB5A. Heterodimer with RABGEF1. The heterodimer binds RAB4A and RAB5A that have been activated by GTP-binding. Interacts with TSC2. Interacts with GGA1 (via GAE domain), GGA2 (via GAE domain) and GGA3 (via GAE domain). Interacts with AP1G1 (via GAE domain). Interacts with AP1G2 (via GAE domain). Interacts with ECPAS. Interacts with KCNH1. Interacts with PKD1 (via C-terminal domain) and GGA1; the interactions recruit PKD1:PKD2 complex to GGA1 and ARL3 at trans-Golgi network. Post-translationally, proteolytic cleavage by caspases in apoptotic cells causes loss of endosome fusion activity.

Its subcellular location is the cytoplasm. It is found in the early endosome. The protein localises to the recycling endosome. It localises to the cytoplasmic vesicle. Its function is as follows. Rab effector protein acting as linker between gamma-adaptin, RAB4A and RAB5A. Involved in endocytic membrane fusion and membrane trafficking of recycling endosomes. Involved in KCNH1 channels trafficking to and from the cell membrane. Stimulates RABGEF1 mediated nucleotide exchange on RAB5A. Mediates the traffic of PKD1:PKD2 complex from the endoplasmic reticulum through the Golgi to the cilium. The sequence is that of Rab GTPase-binding effector protein 1 (RABEP1) from Homo sapiens (Human).